Reading from the N-terminus, the 212-residue chain is MGRGKIEIKRIENSSNRQVTYSKRRNGIMKKAKEITVLCDAHVSLVIFASSGKMHEYCSPSTTLIDILDRYHKQSGKRLWDAKHENLNNELDRIKKENDSMQIELRHLKGEDISSLHHKELMAIEDALEIGLASVRNKQMEFYKMVKKNQRILEEENKHLNYIVHHQGMPMEAGNVREVESGYHQRAVRDYNPQMPFAFRVQPIQPNLQERI.

An MADS-box domain is found at 1–61 (MGRGKIEIKR…GKMHEYCSPS (61 aa)). Residues 84–170 (HENLNNELDR…NYIVHHQGMP (87 aa)) enclose the K-box domain.

Expressed during flower development in stamens and petals.

The protein resides in the nucleus. Probable transcription factor that may play role in specifying stamen and petal organ identity. The chain is Agamous-like MADS-box protein MADS9 from Vitis vinifera (Grape).